The chain runs to 183 residues: Phosphopantetheine adenylyltransferase (183 aa).

Residue threonine 13 participates in substrate binding. ATP is bound by residues 13–14 (TF) and histidine 21. 3 residues coordinate substrate: lysine 45, leucine 81, and arginine 95. ATP contacts are provided by residues 96–98 (GLR), glutamate 106, and 131–137 (HQFISSR).

It belongs to the bacterial CoaD family. Homohexamer. It depends on Mg(2+) as a cofactor.

Its subcellular location is the cytoplasm. It catalyses the reaction (R)-4'-phosphopantetheine + ATP + H(+) = 3'-dephospho-CoA + diphosphate. Its pathway is cofactor biosynthesis; coenzyme A biosynthesis; CoA from (R)-pantothenate: step 4/5. In terms of biological role, reversibly transfers an adenylyl group from ATP to 4'-phosphopantetheine, yielding dephospho-CoA (dPCoA) and pyrophosphate. This Rhodospirillum centenum (strain ATCC 51521 / SW) protein is Phosphopantetheine adenylyltransferase.